The primary structure comprises 114 residues: Transcription factor S1 (114 aa).

Positions 1–43 (MIVVKFCPKCNSMMVPKKSNGKNVYRCTKCGYEKEVPETTIVV) are N-ZR. Zn(2+) contacts are provided by Cys-7, Cys-10, Cys-27, Cys-30, Cys-75, and Cys-78. Residues 63–114 (MPSGAQKIKGVLCPSCKNDEAYFWILQTRRADEPPTRFYKCTKCGKVWREYE) form a C-ZR region. The TFIIS-type zinc finger occupies 71–111 (KGVLCPSCKNDEAYFWILQTRRADEPPTRFYKCTKCGKVWR). Residues Asp-94 and Glu-95 contribute to the active site. Cys-103 and Cys-106 together coordinate Zn(2+).

This sequence belongs to the archaeal RpoM/eukaryotic RPA12/RPB9/RPC11 RNA polymerase family. In terms of assembly, interacts with RNA polymerase; probably competes with TFS4 for the same binding site. Zn(2+) serves as cofactor.

Its function is as follows. Induces RNA cleavage activity in the RNA polymerase. Induces rapid cleavage of a stalled transcription elongation complex with a 2-nucleotide reduction at the 3' end of the nascent RNA. Truncated RNA is able to resume elongation. During transcription elongation it enhances processivity. Involved in transcriptional proofreading and fidelity. Misincorporation of nucleotides during elongation of transcription leads to arrested elongation complexes which are rescued by TFS-promoted removal of a dinucleotide from the 3'-end. TFS1 is able to induce a cleavage resynthesis cycle in stalled elongation complexes (resulting from the next missing nucleotide or a reduced incorporation rate of a wrong nucleotide) preventing misincorporation and enabling proofreading in a post-incorporation manner. Pausing of elongation complexes is the main determinant of TFS-induced RNA cleavage. This Saccharolobus solfataricus (strain ATCC 35092 / DSM 1617 / JCM 11322 / P2) (Sulfolobus solfataricus) protein is Transcription factor S1.